The primary structure comprises 76 residues: Putative defensin-like protein 62 (76 aa).

A signal peptide spans 1 to 26; the sequence is MDVTKTYVTIFVVAILTISVLIQIQQ. 4 disulfides stabilise this stretch: C30-C71, C34-C57, C43-C69, and C47-C70.

It belongs to the DEFL family.

The protein localises to the secreted. The protein is Putative defensin-like protein 62 of Arabidopsis thaliana (Mouse-ear cress).